The following is a 541-amino-acid chain: MTVFNKFARSFKSHWLLYLSVIVFGITNLVASSGAHMVQRLLFFVLTILVVKRISSLPLRLLVAAPFVLLTAADMSISLYSWCTFGTTFNDGFAISVLQSDPDEVAKMLGMYSPYLCAFAFLSLLFLAVIIKYDVSLPTKKVTGILLLIVISGSLFSACQFAYKDAKNKNAFSPYILASRFATYTPFFNLNYFALAAKEHQRLLSIANTVPYFQLSVRDTGIDTYVLIVGESVRVDNMSLYGYTRSTTPQVEAQRKQIKLFNQAISGAPYTALSVPLSLTADSVLSHDIHNYPDNIINMANQAGFQTFWLSSQSAFRQNGTAVTSIAMRAMETVYVRGFDELLLPHLSQALQQNTQQKKLIVLHLNGSHEPACSAYPQSSAVFQPQDDQDACYDNSIHYTDSLLGQVFELLKDRRASVMYFADHGLERDPTKKNVYFHGGREASQQAYHVPMFIWYSPVLGDGVDRTTENNIFSTAYNNYLINAWMGVTKPEQPQTLEEVIVHYKGDSLVVDANHDVFDYVMLRKEFTEDKQGNPTPEGQG.

Residues Met1–Arg60 lie on the Periplasmic side of the membrane. A helical membrane pass occupies residues Leu61–Ser81. Residues Trp82–Gly110 lie on the Cytoplasmic side of the membrane. Residues Met111–Ile131 traverse the membrane as a helical segment. At Lys132–Lys141 the chain is on the periplasmic side. Residues Val142–Ala162 traverse the membrane as a helical segment. The Cytoplasmic segment spans residues Tyr163 to Ala264. A helical membrane pass occupies residues Ile265–Leu285. Residues Ser286–Gly541 lie on the Periplasmic side of the membrane.

Belongs to the phosphoethanolamine transferase family.

It localises to the cell inner membrane. There are several lipid A forms in this strain, including a phosphoethanolamine (1-O-P-pEtN) form; overexpression of this gene does not lead to higher levels of the 1-O-P-pEtN form of lipid A. The sequence is that of Putative transferase YhbX (yhbX) from Escherichia coli O157:H7.